The chain runs to 255 residues: 5'-nucleotidase SurE (255 aa).

A divalent metal cation is bound by residues aspartate 8, aspartate 9, serine 39, and asparagine 95.

Belongs to the SurE nucleotidase family. It depends on a divalent metal cation as a cofactor.

It localises to the cytoplasm. The catalysed reaction is a ribonucleoside 5'-phosphate + H2O = a ribonucleoside + phosphate. In terms of biological role, nucleotidase that shows phosphatase activity on nucleoside 5'-monophosphates. This is 5'-nucleotidase SurE from Thermosipho africanus (strain TCF52B).